Consider the following 617-residue polypeptide: Dihydroxy-acid dehydratase (617 aa).

Asp81 serves as a coordination point for Mg(2+). Residue Cys122 coordinates [2Fe-2S] cluster. Residues Asp123 and Lys124 each coordinate Mg(2+). Lys124 carries the post-translational modification N6-carboxylysine. Cys195 lines the [2Fe-2S] cluster pocket. Glu492 provides a ligand contact to Mg(2+). Ser518 serves as the catalytic Proton acceptor.

This sequence belongs to the IlvD/Edd family. Homodimer. Requires [2Fe-2S] cluster as cofactor. It depends on Mg(2+) as a cofactor.

The catalysed reaction is (2R)-2,3-dihydroxy-3-methylbutanoate = 3-methyl-2-oxobutanoate + H2O. It carries out the reaction (2R,3R)-2,3-dihydroxy-3-methylpentanoate = (S)-3-methyl-2-oxopentanoate + H2O. It functions in the pathway amino-acid biosynthesis; L-isoleucine biosynthesis; L-isoleucine from 2-oxobutanoate: step 3/4. The protein operates within amino-acid biosynthesis; L-valine biosynthesis; L-valine from pyruvate: step 3/4. Functionally, functions in the biosynthesis of branched-chain amino acids. Catalyzes the dehydration of (2R,3R)-2,3-dihydroxy-3-methylpentanoate (2,3-dihydroxy-3-methylvalerate) into 2-oxo-3-methylpentanoate (2-oxo-3-methylvalerate) and of (2R)-2,3-dihydroxy-3-methylbutanoate (2,3-dihydroxyisovalerate) into 2-oxo-3-methylbutanoate (2-oxoisovalerate), the penultimate precursor to L-isoleucine and L-valine, respectively. This chain is Dihydroxy-acid dehydratase, found in Xanthobacter autotrophicus (strain ATCC BAA-1158 / Py2).